A 160-amino-acid polypeptide reads, in one-letter code: Type IV major fimbrial protein FimA (160 aa).

Residues 1–7 (MKSLQKG) constitute a propeptide, leader sequence. Residue phenylalanine 8 is modified to N-methylphenylalanine. A helical membrane pass occupies residues 8–28 (FTLIELMIVVAIIGILAAFAI). Cysteine 63 and cysteine 106 are joined by a disulfide.

This sequence belongs to the N-Me-Phe pilin family. In terms of assembly, the pili are polar flexible filaments of about 5.4 nanometers diameter and 2.5 micrometers average length; they consist of only a single polypeptide chain arranged in a helical configuration of five subunits per turn in the assembled pilus.

The protein resides in the fimbrium. Its subcellular location is the membrane. Functionally, major component of the type IV fimbriae that plays an essential role in twitching motility, natural transformation, and protease secretion. The polypeptide is Type IV major fimbrial protein FimA (fimA) (Dichelobacter nodosus (Bacteroides nodosus)).